The following is a 407-amino-acid chain: Phosphoglycerate kinase (407 aa).

Substrate-binding positions include 24–26 (DIN), R39, 60–63 (HQSR), R117, and R157. Residues E330 and 355–358 (GGHI) contribute to the ATP site.

Belongs to the phosphoglycerate kinase family.

Its subcellular location is the cytoplasm. The enzyme catalyses (2R)-3-phosphoglycerate + ATP = (2R)-3-phospho-glyceroyl phosphate + ADP. It functions in the pathway carbohydrate degradation; glycolysis; pyruvate from D-glyceraldehyde 3-phosphate: step 2/5. This chain is Phosphoglycerate kinase (pgk), found in Archaeoglobus fulgidus (strain ATCC 49558 / DSM 4304 / JCM 9628 / NBRC 100126 / VC-16).